Consider the following 195-residue polypeptide: Molybdenum cofactor guanylyltransferase (195 aa).

GTP-binding positions include 10 to 12, Lys-23, Asn-51, Asp-69, and Asp-99; that span reads LAG. A Mg(2+)-binding site is contributed by Asp-99.

Belongs to the MobA family. In terms of assembly, monomer. Requires Mg(2+) as cofactor.

It localises to the cytoplasm. It catalyses the reaction Mo-molybdopterin + GTP + H(+) = Mo-molybdopterin guanine dinucleotide + diphosphate. Its function is as follows. Transfers a GMP moiety from GTP to Mo-molybdopterin (Mo-MPT) cofactor (Moco or molybdenum cofactor) to form Mo-molybdopterin guanine dinucleotide (Mo-MGD) cofactor. This chain is Molybdenum cofactor guanylyltransferase, found in Yersinia pseudotuberculosis serotype O:1b (strain IP 31758).